The chain runs to 244 residues: Type III pantothenate kinase (244 aa).

11–18 contacts ATP; sequence DAGNTSIK. Residues Tyr90 and 97 to 100 contribute to the substrate site; that span reads GIDR. The active-site Proton acceptor is the Asp99. Asp119 is a binding site for K(+). Thr122 serves as a coordination point for ATP. Thr175 serves as a coordination point for substrate.

This sequence belongs to the type III pantothenate kinase family. As to quaternary structure, homodimer. NH4(+) is required as a cofactor. It depends on K(+) as a cofactor.

It is found in the cytoplasm. It catalyses the reaction (R)-pantothenate + ATP = (R)-4'-phosphopantothenate + ADP + H(+). It participates in cofactor biosynthesis; coenzyme A biosynthesis; CoA from (R)-pantothenate: step 1/5. Catalyzes the phosphorylation of pantothenate (Pan), the first step in CoA biosynthesis. The sequence is that of Type III pantothenate kinase from Marinomonas sp. (strain MWYL1).